Here is a 307-residue protein sequence, read N- to C-terminus: 4-hydroxybenzoate octaprenyltransferase (307 aa).

9 helical membrane passes run 19–39, 48–68, 105–125, 127–147, 150–170, 172–192, 221–241, 243–263, and 282–302; these read PVGI…AAMG, VTAG…AILM, AIAA…FLPI, VFYW…MKRY, LPQV…YVAI, GAAD…TVAY, VIII…VMWH, FVPT…AMMF, and FLAN…ACVW.

This sequence belongs to the UbiA prenyltransferase family. It depends on Mg(2+) as a cofactor.

It is found in the cell inner membrane. The catalysed reaction is all-trans-octaprenyl diphosphate + 4-hydroxybenzoate = 4-hydroxy-3-(all-trans-octaprenyl)benzoate + diphosphate. The protein operates within cofactor biosynthesis; ubiquinone biosynthesis. Its function is as follows. Catalyzes the prenylation of para-hydroxybenzoate (PHB) with an all-trans polyprenyl group. Mediates the second step in the final reaction sequence of ubiquinone-8 (UQ-8) biosynthesis, which is the condensation of the polyisoprenoid side chain with PHB, generating the first membrane-bound Q intermediate 3-octaprenyl-4-hydroxybenzoate. This Psychrobacter arcticus (strain DSM 17307 / VKM B-2377 / 273-4) protein is 4-hydroxybenzoate octaprenyltransferase.